The primary structure comprises 180 residues: Large ribosomal subunit protein uL6 (180 aa).

This sequence belongs to the universal ribosomal protein uL6 family. Part of the 50S ribosomal subunit.

This protein binds to the 23S rRNA, and is important in its secondary structure. It is located near the subunit interface in the base of the L7/L12 stalk, and near the tRNA binding site of the peptidyltransferase center. The polypeptide is Large ribosomal subunit protein uL6 (Borrelia recurrentis (strain A1)).